Here is a 283-residue protein sequence, read N- to C-terminus: MEMO1 family protein DKAM_1357 (283 aa).

This sequence belongs to the MEMO1 family.

This chain is MEMO1 family protein DKAM_1357, found in Desulfurococcus amylolyticus (strain DSM 18924 / JCM 16383 / VKM B-2413 / 1221n) (Desulfurococcus kamchatkensis).